The following is a 339-amino-acid chain: Lipoate-protein ligase A (339 aa).

A BPL/LPL catalytic domain is found at 29-217; that stretch reads PKKQSILFLW…AFFQHYGMKV (189 aa). ATP contacts are provided by residues Arg71, 76–79, and Lys135; that span reads GAVF. Lys135 serves as a coordination point for (R)-lipoate.

It belongs to the LplA family. As to quaternary structure, monomer.

It localises to the cytoplasm. The catalysed reaction is L-lysyl-[lipoyl-carrier protein] + (R)-lipoate + ATP = N(6)-[(R)-lipoyl]-L-lysyl-[lipoyl-carrier protein] + AMP + diphosphate + H(+). Its pathway is protein modification; protein lipoylation via exogenous pathway; protein N(6)-(lipoyl)lysine from lipoate: step 1/2. It participates in protein modification; protein lipoylation via exogenous pathway; protein N(6)-(lipoyl)lysine from lipoate: step 2/2. In terms of biological role, catalyzes both the ATP-dependent activation of exogenously supplied lipoate to lipoyl-AMP and the transfer of the activated lipoyl onto the lipoyl domains of lipoate-dependent enzymes. In Blochmanniella pennsylvanica (strain BPEN), this protein is Lipoate-protein ligase A.